Reading from the N-terminus, the 513-residue chain is Bifunctional purine biosynthesis protein PurH (513 aa).

Residues 1-145 (MTKKAIISVY…KNFKYITVII (145 aa)) enclose the MGS-like domain.

The protein belongs to the PurH family.

The catalysed reaction is (6R)-10-formyltetrahydrofolate + 5-amino-1-(5-phospho-beta-D-ribosyl)imidazole-4-carboxamide = 5-formamido-1-(5-phospho-D-ribosyl)imidazole-4-carboxamide + (6S)-5,6,7,8-tetrahydrofolate. The enzyme catalyses IMP + H2O = 5-formamido-1-(5-phospho-D-ribosyl)imidazole-4-carboxamide. It participates in purine metabolism; IMP biosynthesis via de novo pathway; 5-formamido-1-(5-phospho-D-ribosyl)imidazole-4-carboxamide from 5-amino-1-(5-phospho-D-ribosyl)imidazole-4-carboxamide (10-formyl THF route): step 1/1. It functions in the pathway purine metabolism; IMP biosynthesis via de novo pathway; IMP from 5-formamido-1-(5-phospho-D-ribosyl)imidazole-4-carboxamide: step 1/1. This chain is Bifunctional purine biosynthesis protein PurH, found in Caldicellulosiruptor saccharolyticus (strain ATCC 43494 / DSM 8903 / Tp8T 6331).